Consider the following 274-residue polypeptide: Large ribosomal subunit protein uL2cz/uL2cy (274 aa).

The segment at 224–274 (NPVDHPHGGGEGRAPIGRKKPATPWGYPALGRRSRKRNKYSDNLILRRRSK) is disordered.

Belongs to the universal ribosomal protein uL2 family. Part of the 50S ribosomal subunit.

The protein resides in the plastid. It localises to the chloroplast. The chain is Large ribosomal subunit protein uL2cz/uL2cy (rpl2-A) from Carica papaya (Papaya).